Consider the following 1850-residue polypeptide: Chitin synthase V (1850 aa).

Residues 1 to 27 are disordered; it reads MASTLPPLGGGNGGPHTQHSLPSLPAH. A Myosin motor domain is found at 1-779; that stretch reads MASTLPPLGG…EIAGLVDGSA (779 aa). 105–112 is a binding site for ATP; it reads GESGSGKS. Asn-245, Asn-290, Asn-427, Asn-481, and Asn-558 each carry an N-linked (GlcNAc...) asparagine glycan. Residues 289–309 are disordered; the sequence is NNTSATGDDSGGFSHEGGQTS. The interval 593–647 is disordered; the sequence is SKPMRAPSVMSRKGGRGRGIASQRRQQESNLFDSGNTHAESRSPKGGNKGGIDQG. Residues 620–630 show a composition bias toward polar residues; the sequence is ESNLFDSGNTH. The tract at residues 656–680 is actin-binding; that stretch reads LDNVQKAVTDPGTNAYFVFCLKPND. A run of 2 helical transmembrane segments spans residues 884-904 and 923-943; these read WVFT…RWIG and MLIW…PMLI. The region spanning 947 to 1006 is the Cytochrome b5 heme-binding domain; the sequence is QNVFSAAELSSHNGKDGNSAYVSIRGHVIDLGSFADRHYPSFVSRKTMLNYAGMDVSSLF. Residues Asn-1033, Asn-1058, and Asn-1186 are each glycosylated (N-linked (GlcNAc...) asparagine). A helical membrane pass occupies residues 1196–1216; that stretch reads LVLAVSILLVSVIAFKFFAAL. Asn-1453 and Asn-1559 each carry an N-linked (GlcNAc...) asparagine glycan. Transmembrane regions (helical) follow at residues 1568-1588, 1590-1610, 1617-1637, and 1644-1664; these read LIPM…VVFI, LLST…IVLV, VPIT…IIFI, and MVGW…GLPL. Residue Asn-1767 is glycosylated (N-linked (GlcNAc...) asparagine). The region spanning 1800 to 1850 is the DEK-C domain; the sequence is LPSDDALLAEIRDILKTADLMTVTKKGIKQELERRFDVPLDAKRAYINSGK.

It in the N-terminal section; belongs to the TRAFAC class myosin-kinesin ATPase superfamily. Myosin family. In the C-terminal section; belongs to the chitin synthase family. Class V subfamily. In terms of tissue distribution, expressed in conidia and during appressorium formation.

Its subcellular location is the cell membrane. It localises to the cell septum. It is found in the cell tip. It carries out the reaction [(1-&gt;4)-N-acetyl-beta-D-glucosaminyl](n) + UDP-N-acetyl-alpha-D-glucosamine = [(1-&gt;4)-N-acetyl-beta-D-glucosaminyl](n+1) + UDP + H(+). In terms of biological role, polymerizes chitin, a structural polymer of the cell wall and septum, by transferring the sugar moiety of UDP-GlcNAc to the non-reducing end of the growing chitin polymer. Contributes to the production of conidia and the ability of fungal conidia to germinate. Involved in the fungal cell wall integrity and the ability of conidia to withstand biophysical pressure. Required for appressorium formation and evasion of insect cellular and/or humoral defenses, promoting the fungal dimorphic transition to the production of hyphal bodies that occurs within hosts, and ultimately to virulence. The sequence is that of Chitin synthase V from Metarhizium acridum (strain CQMa 102).